Reading from the N-terminus, the 76-residue chain is Omega-conotoxin-like Ai6.3 (76 aa).

An N-terminal signal peptide occupies residues 1-22; sequence MKLTCLMIVAVLFLTAWTFVTA. Positions 23-50 are excised as a propeptide; that stretch reads VPDSSNALENLYLKAHHEMNNPEDSELN. 3 cysteine pairs are disulfide-bonded: C53–C67, C60–C71, and C66–C75.

This sequence belongs to the conotoxin O1 superfamily. Expressed by the venom duct.

It is found in the secreted. Its function is as follows. Omega-conotoxins act at presynaptic membranes, they bind and block voltage-gated calcium channels (Cav). The polypeptide is Omega-conotoxin-like Ai6.3 (Conus ammiralis (Admiral cone)).